Consider the following 271-residue polypeptide: Phosphonoacetaldehyde hydrolase (271 aa).

Asp-12 (nucleophile) is an active-site residue. Mg(2+)-binding residues include Asp-12 and Ala-14. Lys-54 acts as the Schiff-base intermediate with substrate in catalysis. Asp-188 provides a ligand contact to Mg(2+).

This sequence belongs to the HAD-like hydrolase superfamily. PhnX family. As to quaternary structure, homodimer. It depends on Mg(2+) as a cofactor.

The catalysed reaction is phosphonoacetaldehyde + H2O = acetaldehyde + phosphate + H(+). In terms of biological role, involved in phosphonate degradation. This is Phosphonoacetaldehyde hydrolase from Aliivibrio salmonicida (strain LFI1238) (Vibrio salmonicida (strain LFI1238)).